The sequence spans 458 residues: Carboxypeptidase N catalytic chain (458 aa).

An N-terminal signal peptide occupies residues 1–20; that stretch reads MSDLLSVFLHLLLLFKLVAP. A Peptidase M14 domain is found at 24–338; that stretch reads RHHRYDDLVR…EALIQFLEQV (315 aa). A disulfide bond links Cys42 and Cys104. Residues His86, Glu89, and His216 each coordinate Zn(2+). A disulfide bridge connects residues Cys271 and Cys311. Residue Glu308 is the Proton donor/acceptor of the active site. O-linked (GalNAc...) threonine glycosylation is found at Thr400, Thr402, and Thr409. Residues 423-458 form a disordered region; it reads SPVRRAPSRRHGVRAKVQPQARKKEMEMRQLQRGPA.

This sequence belongs to the peptidase M14 family. As to quaternary structure, tetramer of two catalytic chains and two glycosylated inactive chains. Requires Zn(2+) as cofactor. As to expression, synthesized in the liver and secreted in plasma.

The protein resides in the secreted. It is found in the extracellular space. It catalyses the reaction Release of a C-terminal basic amino acid, preferentially lysine.. Its function is as follows. Protects the body from potent vasoactive and inflammatory peptides containing C-terminal Arg or Lys (such as kinins or anaphylatoxins) which are released into the circulation. The polypeptide is Carboxypeptidase N catalytic chain (CPN1) (Homo sapiens (Human)).